A 416-amino-acid chain; its full sequence is Maltoporin (416 aa).

Positions methionine 1–alanine 26 are cleaved as a signal peptide.

It belongs to the porin LamB (TC 1.B.3) family. Homotrimer formed of three 18-stranded antiparallel beta-barrels, containing three independent channels.

The protein resides in the cell outer membrane. The enzyme catalyses beta-maltose(in) = beta-maltose(out). Involved in the transport of maltose and maltodextrins. The polypeptide is Maltoporin (Vibrio cholerae serotype O1 (strain ATCC 39541 / Classical Ogawa 395 / O395)).